The primary structure comprises 312 residues: Malate dehydrogenase (312 aa).

NAD(+) contacts are provided by residues 7-13 (GAAGGIG) and aspartate 34. Substrate contacts are provided by arginine 81 and arginine 87. Residues asparagine 94 and 117–119 (ITN) each bind NAD(+). Substrate is bound by residues asparagine 119 and arginine 153. The Proton acceptor role is filled by histidine 177. Methionine 227 is an NAD(+) binding site.

This sequence belongs to the LDH/MDH superfamily. MDH type 1 family. Homodimer.

It carries out the reaction (S)-malate + NAD(+) = oxaloacetate + NADH + H(+). Catalyzes the reversible oxidation of malate to oxaloacetate. The polypeptide is Malate dehydrogenase (Shigella dysenteriae serotype 1 (strain Sd197)).